We begin with the raw amino-acid sequence, 189 residues long: Glucose-6-phosphate isomerase (189 aa).

Fe cation-binding residues include His88, His90, Glu97, and His136.

This sequence belongs to the archaeal-type GPI family. As to quaternary structure, homodimer.

It localises to the cytoplasm. The enzyme catalyses alpha-D-glucose 6-phosphate = beta-D-fructose 6-phosphate. It participates in carbohydrate degradation; glycolysis; D-glyceraldehyde 3-phosphate and glycerone phosphate from D-glucose: step 2/4. The sequence is that of Glucose-6-phosphate isomerase from Thermococcus onnurineus (strain NA1).